A 515-amino-acid polypeptide reads, in one-letter code: 1-pyrroline-5-carboxylate dehydrogenase (515 aa).

Residues Glu286 and Cys320 contribute to the active site.

Belongs to the aldehyde dehydrogenase family. RocA subfamily.

The enzyme catalyses L-glutamate 5-semialdehyde + NAD(+) + H2O = L-glutamate + NADH + 2 H(+). The protein operates within amino-acid degradation; L-proline degradation into L-glutamate; L-glutamate from L-proline: step 2/2. This Geobacillus sp. (strain WCH70) protein is 1-pyrroline-5-carboxylate dehydrogenase.